The sequence spans 450 residues: Phosphoglucosamine mutase (450 aa).

Residue serine 102 is the Phosphoserine intermediate of the active site. Positions 102, 244, 246, and 248 each coordinate Mg(2+). Serine 102 is subject to Phosphoserine.

Belongs to the phosphohexose mutase family. It depends on Mg(2+) as a cofactor. In terms of processing, activated by phosphorylation.

It carries out the reaction alpha-D-glucosamine 1-phosphate = D-glucosamine 6-phosphate. Functionally, catalyzes the conversion of glucosamine-6-phosphate to glucosamine-1-phosphate. The chain is Phosphoglucosamine mutase from Nitratidesulfovibrio vulgaris (strain ATCC 29579 / DSM 644 / CCUG 34227 / NCIMB 8303 / VKM B-1760 / Hildenborough) (Desulfovibrio vulgaris).